Reading from the N-terminus, the 639-residue chain is Transcription factor phomR (639 aa).

A DNA-binding region (zn(2)-C6 fungal-type) is located at residues 14 to 41 (CWTCRLRRKKCNEGGPPCDNCEARGIHC). Disordered regions lie at residues 58-136 (REEA…AGTG) and 476-499 (LPRS…TGPE). Low complexity predominate over residues 68-108 (SGRGRSYSRSSSTAAAAAPKPAEGAMVTGGSSSSSRGSGSS).

It localises to the nucleus. Its function is as follows. Transcription factor; part of the gene cluster that mediates the biosynthesis of the phomopsins, a group of hexapeptide mycotoxins which infects lupins and causes lupinosis disease in livestock. May play a role in the regulation of the production of phomopsins. The polypeptide is Transcription factor phomR (Diaporthe leptostromiformis (Lupinosis disease fungus)).